The following is a 188-amino-acid chain: Protein TIFY 9 (188 aa).

The disordered stretch occupies residues 20-41; the sequence is DADDRHAKSGGSSASSSSSIRG. The segment covering 28 to 38 has biased composition (low complexity); it reads SGGSSASSSSS. Residues 80–114 form the Tify domain; sequence AAAAAAPMTLFYNGSVAVFDVSHDKAEAIMRMATE. A Jas motif is present at residues 135–160; that stretch reads PLTRTKSLQRFLSKRKERLTSLGPYQ. The tract at residues 156–188 is disordered; it reads LGPYQVGGPAAVGATTSTTTKSFLAKEEEHTAS. Basic and acidic residues predominate over residues 179–188; that stretch reads LAKEEEHTAS.

It belongs to the TIFY/JAZ family. In terms of assembly, interacts with COI1A and COI2 in a coronatine-dependent manner. Coronatine is an analog of jasmonoyl isoleucine (JA-Ile). In terms of processing, ubiquitinated. Targeted for degradation by the SCF(COI1) E3 ubiquitin ligase-proteasome pathway during jasmonate signaling.

In terms of biological role, repressor of jasmonate responses. In Oryza sativa subsp. japonica (Rice), this protein is Protein TIFY 9.